The chain runs to 115 residues: U3-lycotoxin-Ls1a (115 aa).

The signal sequence occupies residues 1–20; that stretch reads MKFVLLFGVLLVTLFSYSSA. A propeptide spanning residues 21-44 is cleaved from the precursor; sequence EMLDDFDQADEDELLSLIEKEEAR. Cystine bridges form between Cys-48–Cys-63, Cys-55–Cys-72, Cys-62–Cys-87, and Cys-74–Cys-85.

It belongs to the neurotoxin 19 (CSTX) family. 01 subfamily. Expressed by the venom gland.

Its subcellular location is the secreted. The polypeptide is U3-lycotoxin-Ls1a (Lycosa singoriensis (Wolf spider)).